A 339-amino-acid chain; its full sequence is MSTHLRKLPGLLLCLLLALPAWYLGRLFPIIGAPVFAILLGMLLALFYEHRDKTKEGISFTSKYILQTAVVLLGFGLNLTQVMAVGMQSLPIIISTIATALLVAYGSQKWLRIDVNTATLVGVGSSICGGSAIAATAPVIKAKDDEVAKAISVIFLFNMLAALLFPSLGQLLGLSNEGFAIFAGTAVNDTSSVTATATAWDALHHSNTLDGATIVKLTRTLAILPITLGLSLYRAKKEHDIVTEEGFSLRKSFPRFILFFLLASLITTLMISLGVSADVFHSLKTLSKFFIVMAMAAIGLNTNLVKLIKTGGQAILLGAICWVAITLVSLAMQLSLGIW.

A run of 9 helical transmembrane segments spans residues 7-24, 28-50, 57-79, 84-106, 118-140, 150-172, 256-275, 290-307, and 314-336; these read KLPG…AWYL, FPII…FYEH, GISF…GLNL, AVGM…VAYG, ATLV…APVI, AISV…GQLL, FILF…SLGV, FIVM…LVKL, and AILL…QLSL.

This sequence belongs to the UPF0324 family.

The protein resides in the cell membrane. The chain is UPF0324 membrane protein M6_Spy0799 from Streptococcus pyogenes serotype M6 (strain ATCC BAA-946 / MGAS10394).